The primary structure comprises 189 residues: Photosystem I assembly protein Ycf4 (189 aa).

The next 2 membrane-spanning stretches (helical) occupy residues T31–F51 and V70–I90.

It belongs to the Ycf4 family.

The protein localises to the plastid. It is found in the chloroplast thylakoid membrane. Its function is as follows. Seems to be required for the assembly of the photosystem I complex. This Chlorokybus atmophyticus (Soil alga) protein is Photosystem I assembly protein Ycf4.